The sequence spans 283 residues: Quinate/shikimate dehydrogenase (NAD(+)) (283 aa).

Shikimate contacts are provided by serine 17, threonine 69, lysine 73, asparagine 94, and aspartate 110. Residues 17–19 (SRT), threonine 69, lysine 73, asparagine 94, and aspartate 110 contribute to the L-quinate site. Lysine 73 serves as the catalytic Proton acceptor. NAD(+)-binding positions include 137–138 (GV), aspartate 158, arginine 163, 203–206 (PMGM), alanine 213, valine 228, and glycine 251. Glutamine 258 is a shikimate binding site. Residue glutamine 258 coordinates L-quinate.

Belongs to the shikimate dehydrogenase family. As to quaternary structure, homodimer.

It carries out the reaction L-quinate + NAD(+) = 3-dehydroquinate + NADH + H(+). It catalyses the reaction shikimate + NAD(+) = 3-dehydroshikimate + NADH + H(+). It functions in the pathway metabolic intermediate biosynthesis; chorismate biosynthesis; chorismate from D-erythrose 4-phosphate and phosphoenolpyruvate: step 4/7. The protein operates within aromatic compound metabolism; 3,4-dihydroxybenzoate biosynthesis; 3-dehydroquinate from D-quinate (NAD(+) route). Its function is as follows. Involved in the biosynthesis of the chorismate, which leads to the biosynthesis of aromatic amino acids, and plays a key role in the quinate degradation pathway. Catalyzes the NAD(+)-dependent oxidation of both quinate and shikimate to 3-dehydroquinate and 3-dehydroshikimate, respectively. The sequence is that of Quinate/shikimate dehydrogenase (NAD(+)) from Corynebacterium glutamicum (strain R).